Consider the following 297-residue polypeptide: Probable lipid kinase YegS-like (297 aa).

The DAGKc domain occupies 2-131 (STFPASLLIL…IDIARVNDKT (130 aa)). Residues Thr40, 66 to 72 (GDGTINE), and Thr93 each bind ATP. Mg(2+) contacts are provided by Leu213, Asp216, and Leu218. The active-site Proton acceptor is Glu269.

The protein belongs to the diacylglycerol/lipid kinase family. YegS lipid kinase subfamily. Mg(2+) is required as a cofactor. It depends on Ca(2+) as a cofactor.

Its subcellular location is the cytoplasm. In terms of biological role, probably phosphorylates lipids; the in vivo substrate is unknown. The sequence is that of Probable lipid kinase YegS-like from Klebsiella pneumoniae (strain 342).